Reading from the N-terminus, the 56-residue chain is Ovomucoid (56 aa).

Residues 6–56 enclose the Kazal-like domain; it reads VDCSEYPKPACMSEYRPLCGSDNKTYVNKCNFCNAVVESNGTLTLSHFGKC. Cystine bridges form between Cys8/Cys38, Cys16/Cys35, and Cys24/Cys56. N-linked (GlcNAc...) asparagine glycosylation occurs at Asn45.

The protein localises to the secreted. This chain is Ovomucoid, found in Colinus virginianus (Northern bobwhite).